Here is a 478-residue protein sequence, read N- to C-terminus: Proline--tRNA ligase (478 aa).

This sequence belongs to the class-II aminoacyl-tRNA synthetase family. ProS type 3 subfamily. Homodimer.

It localises to the cytoplasm. It catalyses the reaction tRNA(Pro) + L-proline + ATP = L-prolyl-tRNA(Pro) + AMP + diphosphate. Catalyzes the attachment of proline to tRNA(Pro) in a two-step reaction: proline is first activated by ATP to form Pro-AMP and then transferred to the acceptor end of tRNA(Pro). The protein is Proline--tRNA ligase of Ignicoccus hospitalis (strain KIN4/I / DSM 18386 / JCM 14125).